The sequence spans 532 residues: Probable pectinesterase/pectinesterase inhibitor 39 (532 aa).

A signal peptide spans 1–34 (MINNHPIREKPKHIIFNLLSLIFFLIFLSTVVSS). Residues 35–169 (QSPSYTTHKT…ENLKEIILDI (135 aa)) are pectinesterase inhibitor 39. N-linked (GlcNAc...) asparagine glycosylation is found at Asn-62, Asn-74, Asn-85, Asn-172, Asn-221, Asn-231, Asn-244, and Asn-287. The interval 221 to 518 (NLSVAIDGTG…FTVGPFIDGS (298 aa)) is pectinesterase 39. Substrate-binding residues include Thr-296 and Gln-326. Asp-349 serves as the catalytic Proton donor; for pectinesterase activity. The Nucleophile; for pectinesterase activity role is filled by Asp-370. 2 N-linked (GlcNAc...) asparagine glycosylation sites follow: Asn-382 and Asn-404. Substrate-binding residues include Arg-438 and Trp-440. N-linked (GlcNAc...) asparagine glycans are attached at residues Asn-502 and Asn-522.

This sequence in the N-terminal section; belongs to the PMEI family. In the C-terminal section; belongs to the pectinesterase family. As to expression, expressed in siliques but not in flower buds.

The protein localises to the secreted. Its subcellular location is the cell wall. The enzyme catalyses [(1-&gt;4)-alpha-D-galacturonosyl methyl ester](n) + n H2O = [(1-&gt;4)-alpha-D-galacturonosyl](n) + n methanol + n H(+). It participates in glycan metabolism; pectin degradation; 2-dehydro-3-deoxy-D-gluconate from pectin: step 1/5. Functionally, acts in the modification of cell walls via demethylesterification of cell wall pectin. The chain is Probable pectinesterase/pectinesterase inhibitor 39 (PME39) from Arabidopsis thaliana (Mouse-ear cress).